Reading from the N-terminus, the 400-residue chain is Deoxyguanosinetriphosphate triphosphohydrolase-like protein (400 aa).

The HD domain occupies 73 to 215 (RLTHSIEVSQ…AAIADDIAYN (143 aa)).

It belongs to the dGTPase family. Type 2 subfamily.

This Bartonella tribocorum (strain CIP 105476 / IBS 506) protein is Deoxyguanosinetriphosphate triphosphohydrolase-like protein.